Reading from the N-terminus, the 607-residue chain is MRLFTHGQVLALLAFVNTISAIPSFSTNSYPAHPAEPVSLVSQHQPQAPLGLWTRLRNSVIERVWGVPPQQRHRGGNKHQYPPFSAPASLRTRYGDDVVLRFKLQTADEVKALVEASNILFLDVWSSTDEWIDIRLAKDVVPSLLGLLPKSLQTTHVPLIRDLPQTIYESYPSPFQSSSGHERGFLPSGEPSSDATNIFFENYQPLSVIVPWMRLLASMFPSHAQFISIGSSFEGRDIPALRVGVRPANDQKPRRTLIIEGGSHAREWIGVSTVNYVAYSLITSYGKSKPISTLLEQFDFIFIPTINPDGYVYTWETDRLWRKNRQETSLPFCHGVDLDRTWGFEWNGNVTGDNPCLESYGGDKPFAGVEAHQLAEWVKEQTEQRNAKFVAFVDLHSYSQQILYPYSYSCLSQPPNLENLEELAMGIAKAIRLTNRKTYAVSSACGGLMASQKKKVKSETFLRMESTGGSALDWFYHDFGVKYAYQLKLRDRGSYGFLLPRENIVPTGNEVFNAVMMLGRFLLGKSRAFQELDWDAGFQRPNKDDKPILNDDDDDDNDDDDDDDDDADTNDDGIGRKDDSWVPDEYKGDNDRDESDGGWGFRRLRKR.

The signal sequence occupies residues 1–21; that stretch reads MRLFTHGQVLALLAFVNTISA. A propeptide spanning residues 22 to 174 is cleaved from the precursor; that stretch reads IPSFSTNSYP…QTIYESYPSP (153 aa). The Peptidase M14 domain maps to 202–522; that stretch reads NYQPLSVIVP…NAVMMLGRFL (321 aa). Residues H264 and E267 each coordinate Zn(2+). Residues 264-267, R322, and 339-340 each bind substrate; these read HARE and DR. A disulfide bond links C333 and C356. A glycan (N-linked (GlcNAc...) asparagine) is linked at N349. Residue H396 coordinates Zn(2+). 397-398 serves as a coordination point for substrate; it reads SY. The interval 539–607 is disordered; the sequence is QRPNKDDKPI…GWGFRRLRKR (69 aa). The segment covering 550 to 571 has biased composition (acidic residues); it reads NDDDDDDNDDDDDDDDDADTND. Over residues 573–590 the composition is skewed to basic and acidic residues; sequence GIGRKDDSWVPDEYKGDN.

The protein belongs to the peptidase M14 family. The cofactor is Zn(2+).

The protein localises to the vacuole. Its subcellular location is the secreted. Functionally, inactive carboxypeptidase that may play a role in cell wall organization and biogenesis. In Ajellomyces capsulatus (strain NAm1 / WU24) (Darling's disease fungus), this protein is Inactive metallocarboxypeptidase ECM14 (ECM14).